The primary structure comprises 354 residues: Alanine racemase (354 aa).

K33 serves as the catalytic Proton acceptor; specific for D-alanine. K33 carries the post-translational modification N6-(pyridoxal phosphate)lysine. R127 contacts substrate. The Proton acceptor; specific for L-alanine role is filled by Y251. Position 299 (M299) interacts with substrate.

It belongs to the alanine racemase family. It depends on pyridoxal 5'-phosphate as a cofactor.

It catalyses the reaction L-alanine = D-alanine. It participates in amino-acid biosynthesis; D-alanine biosynthesis; D-alanine from L-alanine: step 1/1. Functionally, catalyzes the interconversion of L-alanine and D-alanine. May also act on other amino acids. The chain is Alanine racemase (alr) from Fusobacterium nucleatum subsp. nucleatum (strain ATCC 25586 / DSM 15643 / BCRC 10681 / CIP 101130 / JCM 8532 / KCTC 2640 / LMG 13131 / VPI 4355).